Consider the following 54-residue polypeptide: Ovomucoid (54 aa).

A Kazal-like domain is found at 4-54; the sequence is VDCSDYPKPACTLEYMPLCGSDNKTYGNKCNFCNAVVDSNGTLTLSHFGKC. Disulfide bonds link Cys-6–Cys-36, Cys-14–Cys-33, and Cys-22–Cys-54. An N-linked (GlcNAc...) asparagine glycan is attached at Asn-43.

It localises to the secreted. The protein is Ovomucoid of Dendrocygna arcuata (Wandering whistling-duck).